A 265-amino-acid chain; its full sequence is DNA repair protein RecO (265 aa).

Belongs to the RecO family.

Its function is as follows. Involved in DNA repair and RecF pathway recombination. The polypeptide is DNA repair protein RecO (Mycolicibacterium paratuberculosis (strain ATCC BAA-968 / K-10) (Mycobacterium paratuberculosis)).